The primary structure comprises 177 residues: Ribosome maturation factor RimM (177 aa).

Positions 98–177 (GEEFYWRELY…RIEVDWDPGF (80 aa)) constitute a PRC barrel domain.

Belongs to the RimM family. As to quaternary structure, binds ribosomal protein uS19.

It localises to the cytoplasm. An accessory protein needed during the final step in the assembly of 30S ribosomal subunit, possibly for assembly of the head region. Essential for efficient processing of 16S rRNA. May be needed both before and after RbfA during the maturation of 16S rRNA. It has affinity for free ribosomal 30S subunits but not for 70S ribosomes. This is Ribosome maturation factor RimM from Photobacterium profundum (strain SS9).